The primary structure comprises 379 residues: RING finger protein 215 (379 aa).

2 disordered regions span residues 1–21 (MGSA…PPSP) and 44–63 (AADG…RSVR). The Cytoplasmic segment spans residues 1–24 (MGSADRPALRSPSLPPPPPSPPSP). A helical transmembrane segment spans residues 25-45 (LLLLLPLLPLWLGLMGPGAAA). The Extracellular portion of the chain corresponds to 46-252 (DGSEPATGEG…GGAQAQEQKP (207 aa)). Residue N188 is glycosylated (N-linked (GlcNAc...) asparagine). Residues 253–273 (LQQLWNAILLVAMLLCTGLVV) form a helical membrane-spanning segment. Residues 274 to 379 (QAQRQASRQN…NVLGNHYSDD (106 aa)) lie on the Cytoplasmic side of the membrane. The segment at 327 to 368 (CAVCLDYFCNKQWLRVLPCKHEFHRDCVDPWLMLQQTCPLCK) adopts an RING-type; atypical zinc-finger fold.

It is found in the membrane. This chain is RING finger protein 215 (Rnf215), found in Mus musculus (Mouse).